The following is a 687-amino-acid chain: Sphingoid long chain base kinase 5 (687 aa).

Residues 1–20 (MTLKPSKRRKGRSRHSRKKQ) are disordered. Residues Cys91 and Cys94 are each lipidated (S-palmitoyl cysteine; by AKR1). Positions 101–116 (IDRSETSTTDTSKDDL) are enriched in basic and acidic residues. 2 disordered regions span residues 101-130 (IDRSETSTTDTSKDDLSANPKLHYPSVNGQ) and 180-207 (DELESSQKKERKGNSLSRGSNSSSSLLT). Over residues 193–207 (NSLSRGSNSSSSLLT) the composition is skewed to low complexity. Positions 266-405 (RRNKSIFVII…IDLMCCSQPS (140 aa)) constitute a DAGKc domain. Residues 276 to 278 (NPF) and Thr308 contribute to the ATP site. 333-336 (SGDG) is a binding site for substrate. Asp335 acts as the Proton donor/acceptor in catalysis. Residues Glu340, 366–368 (GSG), Arg434, and Arg440 each bind ATP. Residues 506–524 (EYETENEDEDEDADADDED) show a composition bias toward acidic residues. The interval 506-525 (EYETENEDEDEDADADDEDS) is disordered. 652 to 654 (DGE) lines the ATP pocket.

Its subcellular location is the golgi apparatus membrane. The enzyme catalyses (4R)-hydroxysphinganine + ATP = (4R)-hydroxysphinganine 1-phosphate + ADP + H(+). The catalysed reaction is a sphingoid base + ATP = a sphingoid 1-phosphate + ADP + H(+). It carries out the reaction sphinganine + ATP = sphinganine 1-phosphate + ADP + H(+). In terms of biological role, catalyzes the phosphorylation of the sphingoid long chain bases dihydrosphingosine (DHS or sphinganine) and phytosphingosine (PHS) to form dihydrosphingosine 1-phosphate (DHS-1P) and phytosphingosine 1-phosphate (PHS-1P) respectively. Redundant to LCB4, is only responsible for few percent of the total activity. Involved in the biosynthesis of sphingolipids and ceramides. Involved in heat-induced transient cell cycle arrest. Accumulation of phosphorylated sphingoid long chain bases (LCBPs) stimulates calcium influx and activates calcineurin signaling. Involved in heat-stress resistance. This is Sphingoid long chain base kinase 5 (LCB5) from Saccharomyces cerevisiae (strain ATCC 204508 / S288c) (Baker's yeast).